The following is a 492-amino-acid chain: GMP reductase (492 aa).

Residues 30–31 and arginine 78 each bind NADP(+); that span reads SR. CBS domains follow at residues 99-162 and 164-223; these read LIED…LVET and MTPV…RNAT. NADP(+)-binding positions include 260–262 and 313–314; these read DIA and VG. K(+) is bound by residues glycine 314, glycine 316, and cysteine 319. The active-site Thioimidate intermediate is the cysteine 319. Threonine 321 (proton donor/acceptor) is an active-site residue. Residue arginine 322 coordinates K(+). Residues 352–354, 375–376, and 401–403 each bind GMP; these read DGG, GN, and GMA. NADP(+) is bound by residues methionine 402 and 454 to 457; that span reads SGIS. Positions 490-492 match the Microbody targeting signal motif; sequence SKL.

The protein belongs to the IMPDH/GMPR family. GuaC type 1 subfamily. Homotetramer.

The protein resides in the glycosome. It catalyses the reaction IMP + NH4(+) + NADP(+) = GMP + NADPH + 2 H(+). Its activity is regulated as follows. Activated by GTP and inhibited by XMP and the IMP analogs allopurinol nucleotide and thiopurinol nucleotide. In terms of biological role, catalyzes the irreversible NADPH-dependent deamination of GMP to IMP. It functions in the conversion of nucleobase, nucleoside and nucleotide derivatives of G to A nucleotides, and in maintaining the intracellular balance of A and G nucleotides. This is GMP reductase from Leishmania donovani.